The following is a 100-amino-acid chain: Large ribosomal subunit protein uL23 (100 aa).

Belongs to the universal ribosomal protein uL23 family. Part of the 50S ribosomal subunit. Contacts protein L29, and trigger factor when it is bound to the ribosome.

Functionally, one of the early assembly proteins it binds 23S rRNA. One of the proteins that surrounds the polypeptide exit tunnel on the outside of the ribosome. Forms the main docking site for trigger factor binding to the ribosome. The protein is Large ribosomal subunit protein uL23 of Thermotoga neapolitana (strain ATCC 49049 / DSM 4359 / NBRC 107923 / NS-E).